Reading from the N-terminus, the 295-residue chain is Bifunctional protein FolD (295 aa).

Residues 166 to 168 (GRS), serine 191, and isoleucine 232 contribute to the NADP(+) site.

It belongs to the tetrahydrofolate dehydrogenase/cyclohydrolase family. In terms of assembly, homodimer.

It catalyses the reaction (6R)-5,10-methylene-5,6,7,8-tetrahydrofolate + NADP(+) = (6R)-5,10-methenyltetrahydrofolate + NADPH. It carries out the reaction (6R)-5,10-methenyltetrahydrofolate + H2O = (6R)-10-formyltetrahydrofolate + H(+). The protein operates within one-carbon metabolism; tetrahydrofolate interconversion. In terms of biological role, catalyzes the oxidation of 5,10-methylenetetrahydrofolate to 5,10-methenyltetrahydrofolate and then the hydrolysis of 5,10-methenyltetrahydrofolate to 10-formyltetrahydrofolate. This Rhodopseudomonas palustris (strain BisA53) protein is Bifunctional protein FolD.